The primary structure comprises 172 residues: Protein-export protein SecB (172 aa).

Belongs to the SecB family. As to quaternary structure, homotetramer, a dimer of dimers. One homotetramer interacts with 1 SecA dimer.

It localises to the cytoplasm. In terms of biological role, one of the proteins required for the normal export of preproteins out of the cell cytoplasm. It is a molecular chaperone that binds to a subset of precursor proteins, maintaining them in a translocation-competent state. It also specifically binds to its receptor SecA. The chain is Protein-export protein SecB from Ralstonia pickettii (strain 12J).